The chain runs to 181 residues: Cytolethal distending toxin subunit C (181 aa).

The first 15 residues, 1 to 15 (MKKLAIVFTMLLIAG), serve as a signal peptide directing secretion. A lipid anchor (N-palmitoyl cysteine) is attached at Cys16. A lipid anchor (S-diacylglycerol cysteine) is attached at Cys16. One can recognise a Ricin B-type lectin domain in the interval 79 to 181 (QSGWIMIRTP…NPLNTESPII (103 aa)).

As to quaternary structure, heterotrimer of 3 subunits, CdtA, CdtB and CdtC.

Its subcellular location is the cell outer membrane. In terms of biological role, part of the tripartite complex that is required for the CDT activity. CdtC, along with CdtA, probably forms a heterodimeric subunit required for the delivery of CdtB. The sequence is that of Cytolethal distending toxin subunit C (cdtC) from Escherichia coli.